Here is a 376-residue protein sequence, read N- to C-terminus: Homocitrate synthase (376 aa).

Residues 4-259 (WKIIDSTLRE…RRKYKLEMLP (256 aa)) form the Pyruvate carboxyltransferase domain. A 2-oxoglutarate-binding site is contributed by R12. E13 lines the Mg(2+) pocket. Residue H72 participates in 2-oxoglutarate binding. D92 contacts L-lysine. Residue R133 coordinates 2-oxoglutarate. 2 residues coordinate L-lysine: S135 and T166. T166 serves as a coordination point for 2-oxoglutarate. 2 residues coordinate Mg(2+): H195 and H197. H292 functions as the Proton acceptor in the catalytic mechanism.

This sequence belongs to the alpha-IPM synthase/homocitrate synthase family. Homocitrate synthase LYS20/LYS21 subfamily. Exists in an equilibrium between monomer and homodimer. Mg(2+) is required as a cofactor. It depends on Mn(2+) as a cofactor.

Its subcellular location is the cytoplasm. It catalyses the reaction acetyl-CoA + 2-oxoglutarate + H2O = (2R)-homocitrate + CoA + H(+). It carries out the reaction oxaloacetate + acetyl-CoA + H2O = citrate + CoA + H(+). It participates in amino-acid biosynthesis; L-lysine biosynthesis via AAA pathway; L-alpha-aminoadipate from 2-oxoglutarate: step 1/5. With respect to regulation, is highly and competitively inhibited by lysine that binds to the active site and competes with 2-oxoglutarate. Is also slightly inhibited by arginine and 2-aminoethylcysteine. Catalyzes the aldol-type condensation of 2-oxoglutarate with acetyl-CoA to yield homocitrate. Carries out the first step of the alpha-aminoadipate (AAA) lysine biosynthesis pathway. To a lesser extent, can also use oxaloacetate in place of 2-oxoglutarate, leading to citrate. Does not display 2-isopropylmalate synthase activity since it cannot use 2-oxoisovalerate. This Thermus thermophilus (strain ATCC BAA-163 / DSM 7039 / HB27) protein is Homocitrate synthase.